Here is a 314-residue protein sequence, read N- to C-terminus: Acetyl-coenzyme A carboxylase carboxyl transferase subunit beta (314 aa).

Positions 25–294 (VWTKCDSCSQ…PGTKPIVAEF (270 aa)) constitute a CoA carboxyltransferase N-terminal domain. Zn(2+) is bound by residues Cys-29, Cys-32, Cys-48, and Cys-51. The C4-type zinc-finger motif lies at 29 to 51 (CDSCSQVLYRAELERNLEVCPKC).

This sequence belongs to the AccD/PCCB family. In terms of assembly, acetyl-CoA carboxylase is a heterohexamer composed of biotin carboxyl carrier protein (AccB), biotin carboxylase (AccC) and two subunits each of ACCase subunit alpha (AccA) and ACCase subunit beta (AccD). It depends on Zn(2+) as a cofactor.

It is found in the cytoplasm. It catalyses the reaction N(6)-carboxybiotinyl-L-lysyl-[protein] + acetyl-CoA = N(6)-biotinyl-L-lysyl-[protein] + malonyl-CoA. The protein operates within lipid metabolism; malonyl-CoA biosynthesis; malonyl-CoA from acetyl-CoA: step 1/1. Component of the acetyl coenzyme A carboxylase (ACC) complex. Biotin carboxylase (BC) catalyzes the carboxylation of biotin on its carrier protein (BCCP) and then the CO(2) group is transferred by the transcarboxylase to acetyl-CoA to form malonyl-CoA. This chain is Acetyl-coenzyme A carboxylase carboxyl transferase subunit beta, found in Photorhabdus laumondii subsp. laumondii (strain DSM 15139 / CIP 105565 / TT01) (Photorhabdus luminescens subsp. laumondii).